A 382-amino-acid polypeptide reads, in one-letter code: D-alanine--D-alanine ligase (382 aa).

In terms of domain architecture, ATP-grasp spans Lys139 to Ala348. ATP is bound at residue Glu168–Ile223. Residues Asp300, Glu315, and Asn317 each coordinate Mg(2+).

The protein belongs to the D-alanine--D-alanine ligase family. Mg(2+) is required as a cofactor. Requires Mn(2+) as cofactor.

Its subcellular location is the cytoplasm. It catalyses the reaction 2 D-alanine + ATP = D-alanyl-D-alanine + ADP + phosphate + H(+). It functions in the pathway cell wall biogenesis; peptidoglycan biosynthesis. Cell wall formation. The polypeptide is D-alanine--D-alanine ligase (Methylobacterium sp. (strain 4-46)).